Reading from the N-terminus, the 1081-residue chain is uncharacterized protein (1081 aa).

Coiled coils occupy residues 18-131 and 173-242; these read AIEE…FEEN and NHDE…NDDK. Basic and acidic residues predominate over residues 22–53; it reads NNKNREIQEKRQKETKDRNDRMVQNQKDRKEM. Residues 22 to 60 form a disordered region; it reads NNKNREIQEKRQKETKDRNDRMVQNQKDRKEMIGLTNEK. Disordered stretches follow at residues 250–321 and 388–1081; these read TDDE…KPGI and QEPK…GNDE. Residues 267–283 show a composition bias toward pro residues; sequence TPTPTPTPTPTPTPTPT. 2 stretches are compositionally biased toward low complexity: residues 284–313 and 396–410; these read PTTT…KTST and NNQS…QAGD. The segment covering 411–421 has biased composition (basic and acidic residues); it reads DQNKNQNRDEN. Low complexity-rich tracts occupy residues 422 to 568, 576 to 602, 614 to 623, 633 to 644, 662 to 672, and 680 to 733; these read NQGG…NNQE, NQDG…GGEN, GENNQDGGEN, DGENNQDGGENN, GENNQDGGENN, and QDGG…NNQD. 3 stretches are compositionally biased toward acidic residues: residues 748–768, 778–832, and 840–854; these read GGED…DNQD, NNQD…DENN, and QDGD…DENN. 2 stretches are compositionally biased toward low complexity: residues 855-869 and 877-888; these read NQDG…GENN and NQDGGENNQDGE. The span at 889–954 shows a compositional bias: acidic residues; sequence NNQDGDENNN…GDENNQDGDE (66 aa). Composition is skewed to low complexity over residues 955 to 975, 983 to 1026, and 1034 to 1081; these read NNQG…GGDE, ENNQ…GGDE, and GENN…GNDE.

This is an uncharacterized protein from Dictyostelium discoideum (Social amoeba).